The primary structure comprises 208 residues: MSAKGGTIKDKWKMKKWYSIIAPKVFGEVSLGSTPAYDVTQTIGRRVETTLYDLTGDFSQVYVHLYFKIVSNEGDRLITRFVGHELSRDYLRSLIRRKSSKVNSVFDVTTKDGYVVRVKGLVLTTYKCHQSQKTAIRKIINETISKKASELTFDDFTQEVVFGRLANEIFEATKKIYPLRKAEIEKTKVLKVPENLGKQVESSSVSSG.

The protein belongs to the eukaryotic ribosomal protein eS1 family.

In Saccharolobus islandicus (strain Y.N.15.51 / Yellowstone #2) (Sulfolobus islandicus), this protein is Small ribosomal subunit protein eS1.